We begin with the raw amino-acid sequence, 897 residues long: uncharacterized protein (897 aa).

Disordered stretches follow at residues 25–89 (RLQD…TRKR) and 106–168 (PTRL…TPPS). Composition is skewed to low complexity over residues 32 to 44 (SSSPSSAPSSSSS), 57 to 68 (SLQNSQSSSYSL), and 106 to 142 (PTRLTSTPSNSSSLPSIPSSSSTPSISSIPHTTSSVS). The 184-residue stretch at 263 to 446 (SMEQSSKCGG…YSLLKFLRIK (184 aa)) folds into the Helicase ATP-binding domain. 276 to 283 (DDMGLGKT) contacts ATP. Positions 397 to 400 (DEAH) match the DEAH box motif. An RING-type zinc finger spans residues 606 to 655 (CSVCLDPCLAPVFIIPCGHFTCQECMSMLVGQKYGSSSTSTIIAKCPMCR). The region spanning 727–890 (QARQTILDII…LSRLDKEELL (164 aa)) is the Helicase C-terminal domain.

This sequence belongs to the SNF2/RAD54 helicase family.

It localises to the cytoplasm. The protein resides in the nucleus. This is an uncharacterized protein from Schizosaccharomyces pombe (strain 972 / ATCC 24843) (Fission yeast).